The primary structure comprises 1285 residues: Tat-binding homolog 7 (1285 aa).

Disordered stretches follow at residues 1–95, 121–173, 224–243, and 258–359; these read MARS…LTYR, MSDD…RTRR, GREEEEEGDEEEAESGEKEQ, and QEDE…ERGR. Acidic residues-rich tracts occupy residues 226 to 237 and 258 to 270; these read EEEEEGDEEEAE and QEDEESSNAESSE. A compositionally biased stretch (basic residues) spans 311 to 325; it reads NRHHRNRNTSNRRRR. 446-453 contacts ATP; it reads GPPGTGKT. In terms of domain architecture, Bromo spans 928–1032; that stretch reads ALQRQMRMFF…NTFRDAIDDM (105 aa). The tract at residues 1100–1196 is disordered; the sequence is EKLKEKLGIS…PTIQSSSSQE (97 aa). Over residues 1136 to 1149 the composition is skewed to basic residues; it reads KLNKKKKDQKRNKK. A compositionally biased stretch (acidic residues) spans 1155 to 1175; it reads PDGDDTEETEEAVAENNVDAD.

Belongs to the AAA ATPase family.

Functionally, thought to form a complex that enhances transcription from repetitive DNA sequences by modulating chromatin structure. The polypeptide is Tat-binding homolog 7 (Caenorhabditis briggsae).